Consider the following 481-residue polypeptide: tRNA pseudouridine(38/39) synthase (481 aa).

Ala2 carries the post-translational modification N-acetylalanine. The segment covering 29–40 has biased composition (basic and acidic residues); it reads KKEQANNKDSNI. The segment at 29 to 54 is disordered; that stretch reads KKEQANNKDSNIRENSSGAGGKPKRA. Asp118 acts as the Nucleophile in catalysis. Tyr195 is a substrate binding site. Thr456 is subject to Phosphothreonine.

It belongs to the tRNA pseudouridine synthase TruA family.

The protein resides in the nucleus. It carries out the reaction uridine(38/39) in tRNA = pseudouridine(38/39) in tRNA. Functionally, formation of pseudouridine at position 39 in the anticodon stem and loop of transfer RNAs. This chain is tRNA pseudouridine(38/39) synthase (PUS3), found in Bos taurus (Bovine).